The primary structure comprises 101 residues: Small ribosomal subunit protein uS10 (101 aa).

Belongs to the universal ribosomal protein uS10 family. As to quaternary structure, part of the 30S ribosomal subunit.

Functionally, involved in the binding of tRNA to the ribosomes. This chain is Small ribosomal subunit protein uS10, found in Phocaeicola vulgatus (strain ATCC 8482 / DSM 1447 / JCM 5826 / CCUG 4940 / NBRC 14291 / NCTC 11154) (Bacteroides vulgatus).